The primary structure comprises 206 residues: Ribosomal RNA small subunit methyltransferase G (206 aa).

Residues glycine 73, leucine 78, 124–125 (VE), and arginine 139 each bind S-adenosyl-L-methionine.

The protein belongs to the methyltransferase superfamily. RNA methyltransferase RsmG family.

It is found in the cytoplasm. It carries out the reaction guanosine(527) in 16S rRNA + S-adenosyl-L-methionine = N(7)-methylguanosine(527) in 16S rRNA + S-adenosyl-L-homocysteine. Its function is as follows. Specifically methylates the N7 position of guanine in position 527 of 16S rRNA. This chain is Ribosomal RNA small subunit methyltransferase G, found in Serratia proteamaculans (strain 568).